The primary structure comprises 353 residues: uncharacterized protein (353 aa).

The next 9 membrane-spanning stretches (helical) occupy residues 16-36 (AAYIIGFSFLAVSIILGISCG), 77-97 (VVLAALVGAALSIAGAAFQGL), 106-128 (YTLGVSSGASVGAVVTLFLGLHL), 140-160 (SVAAALATMAAVLFFSRLVHA), 167-187 (LILTGVITNSFLGAFISLIIA), 208-228 (GWSYVILFLPFFLLGTILLII), 263-283 (LLTGSAVAVSGTIGFVGLVIP), 296-316 (HLLPLSALLGAGFLVLADLLS), and 323-343 (IELPIGIITSLAGAPVFALIL).

Belongs to the binding-protein-dependent transport system permease family. FecCD subfamily. As to quaternary structure, the complex is composed of two ATP-binding proteins (YvrA), two transmembrane proteins (YvrB) and a solute-binding protein (YvrC).

It is found in the cell membrane. In terms of biological role, probably part of an ABC transporter complex. Probably responsible for the translocation of the substrate across the membrane. This is an uncharacterized protein from Bacillus subtilis (strain 168).